The primary structure comprises 189 residues: UPF0312 protein VPA0850 (189 aa).

The first 22 residues, 1–22 (MKKSLFATGLAIAMALPLGAQA), serve as a signal peptide directing secretion.

Belongs to the UPF0312 family. Type 1 subfamily.

The protein localises to the periplasm. The sequence is that of UPF0312 protein VPA0850 from Vibrio parahaemolyticus serotype O3:K6 (strain RIMD 2210633).